The chain runs to 976 residues: Leucine--tRNA ligase (976 aa).

Residues 1–23 (MTESPTTTPGSTSGAPSGVPSGV) show a composition bias toward low complexity. The interval 1 to 34 (MTESPTTTPGSTSGAPSGVPSGVNDAESDAPRHR) is disordered. The short motif at 86 to 97 (PYPSGEGLHVGH) is the 'HIGH' region element. The short motif at 745 to 749 (KIGKS) is the 'KMSKS' region element. Residue Lys-748 participates in ATP binding.

The protein belongs to the class-I aminoacyl-tRNA synthetase family.

It localises to the cytoplasm. It catalyses the reaction tRNA(Leu) + L-leucine + ATP = L-leucyl-tRNA(Leu) + AMP + diphosphate. The polypeptide is Leucine--tRNA ligase (Mycobacterium ulcerans (strain Agy99)).